The chain runs to 437 residues: Mitochondrial distribution and morphology protein 12 (437 aa).

One can recognise an SMP-LTD domain in the interval 1–437 (MSIDINWRTA…VYPSFWTFLI (437 aa)). Positions 73-85 (DDDADTSDVSEDL) are enriched in acidic residues. 3 disordered regions span residues 73–101 (DDDA…SELN), 187–274 (SDSG…PPRM), and 354–384 (SEQQ…RQGG). Residues 91–101 (SQWDRTHSELN) show a composition bias toward basic and acidic residues. Composition is skewed to polar residues over residues 215-240 (DTSN…NNLN) and 371-381 (ADSSAHTSQKR).

The protein belongs to the MDM12 family. Component of the ER-mitochondria encounter structure (ERMES) or MDM complex, composed of mmm1, mdm10, mdm12 and mdm34. A mmm1 homodimer associates with one molecule of mdm12 on each side in a pairwise head-to-tail manner, and the SMP-LTD domains of mmm1 and mdm12 generate a continuous hydrophobic tunnel for phospholipid trafficking.

It is found in the mitochondrion outer membrane. It localises to the endoplasmic reticulum membrane. Its function is as follows. Component of the ERMES/MDM complex, which serves as a molecular tether to connect the endoplasmic reticulum (ER) and mitochondria. Components of this complex are involved in the control of mitochondrial shape and protein biogenesis, and function in nonvesicular lipid trafficking between the ER and mitochondria. Mdm12 is required for the interaction of the ER-resident membrane protein mmm1 and the outer mitochondrial membrane-resident beta-barrel protein mdm10. The mdm12-mmm1 subcomplex functions in the major beta-barrel assembly pathway that is responsible for biogenesis of all mitochondrial outer membrane beta-barrel proteins, and acts in a late step after the SAM complex. The mdm10-mdm12-mmm1 subcomplex further acts in the TOM40-specific pathway after the action of the mdm12-mmm1 complex. Essential for establishing and maintaining the structure of mitochondria and maintenance of mtDNA nucleoids. The polypeptide is Mitochondrial distribution and morphology protein 12 (Aspergillus clavatus (strain ATCC 1007 / CBS 513.65 / DSM 816 / NCTC 3887 / NRRL 1 / QM 1276 / 107)).